Consider the following 476-residue polypeptide: Proline--tRNA ligase (476 aa).

Belongs to the class-II aminoacyl-tRNA synthetase family. ProS type 3 subfamily. As to quaternary structure, homodimer.

It localises to the cytoplasm. It catalyses the reaction tRNA(Pro) + L-proline + ATP = L-prolyl-tRNA(Pro) + AMP + diphosphate. Its function is as follows. Catalyzes the attachment of proline to tRNA(Pro) in a two-step reaction: proline is first activated by ATP to form Pro-AMP and then transferred to the acceptor end of tRNA(Pro). This Cenarchaeum symbiosum (strain A) protein is Proline--tRNA ligase.